Reading from the N-terminus, the 701-residue chain is Cytosolic endo-beta-N-acetylglucosaminidase 2 (701 aa).

The protein belongs to the glycosyl hydrolase 85 family.

It localises to the cytoplasm. The protein localises to the cytosol. The catalysed reaction is an N(4)-(oligosaccharide-(1-&gt;3)-[oligosaccharide-(1-&gt;6)]-beta-D-Man-(1-&gt;4)-beta-D-GlcNAc-(1-&gt;4)-alpha-D-GlcNAc)-L-asparaginyl-[protein] + H2O = an oligosaccharide-(1-&gt;3)-[oligosaccharide-(1-&gt;6)]-beta-D-Man-(1-&gt;4)-D-GlcNAc + N(4)-(N-acetyl-beta-D-glucosaminyl)-L-asparaginyl-[protein]. Functionally, endoglycosidase that releases N-glycans from glycoproteins by cleaving the beta-1,4-glycosidic bond in the N,N'-diacetylchitobiose core. Involved in the production of high-mannose type N-glycans during plant development and fruit maturation. The chain is Cytosolic endo-beta-N-acetylglucosaminidase 2 from Arabidopsis thaliana (Mouse-ear cress).